We begin with the raw amino-acid sequence, 162 residues long: RxLR effector protein PITG_06094 (162 aa).

The signal sequence occupies residues 1-20 (MRLSFILAATLTGLLACATA). Positions 51–91 (RFLRAYNDAEDDSEDPKNVKNTVDAKPADESEDSELSEEER) match the RxLR-dEER motif. A disordered region spans residues 56–88 (YNDAEDDSEDPKNVKNTVDAKPADESEDSELSE).

This sequence belongs to the RxLR effector family.

Its subcellular location is the secreted. It localises to the host cytoplasm. The protein resides in the host nucleus. It is found in the host nucleolus. In terms of biological role, effector that enhances P.infestans colonization of Nicotiana benthamiana leaves. This is RxLR effector protein PITG_06094 from Phytophthora infestans (strain T30-4) (Potato late blight agent).